The sequence spans 240 residues: 4-hydroxy-tetrahydrodipicolinate reductase (240 aa).

Residues Ala-79 to Thr-81 and Ser-103 to Met-106 each bind NAD(+). The active-site Proton donor/acceptor is His-135. His-136 serves as a coordination point for (S)-2,3,4,5-tetrahydrodipicolinate. Lys-139 serves as the catalytic Proton donor. Position 145–146 (Gly-145–Thr-146) interacts with (S)-2,3,4,5-tetrahydrodipicolinate.

This sequence belongs to the DapB family.

It is found in the cytoplasm. The catalysed reaction is (S)-2,3,4,5-tetrahydrodipicolinate + NAD(+) + H2O = (2S,4S)-4-hydroxy-2,3,4,5-tetrahydrodipicolinate + NADH + H(+). It catalyses the reaction (S)-2,3,4,5-tetrahydrodipicolinate + NADP(+) + H2O = (2S,4S)-4-hydroxy-2,3,4,5-tetrahydrodipicolinate + NADPH + H(+). It participates in amino-acid biosynthesis; L-lysine biosynthesis via DAP pathway; (S)-tetrahydrodipicolinate from L-aspartate: step 4/4. Its function is as follows. Catalyzes the conversion of 4-hydroxy-tetrahydrodipicolinate (HTPA) to tetrahydrodipicolinate. The chain is 4-hydroxy-tetrahydrodipicolinate reductase from Staphylococcus saprophyticus subsp. saprophyticus (strain ATCC 15305 / DSM 20229 / NCIMB 8711 / NCTC 7292 / S-41).